Consider the following 168-residue polypeptide: Quinol oxidase subunit 2 (168 aa).

The helical transmembrane segment at 9-31 (EVWFIVMLVLVLIFFSWNVYYLS) threads the bilayer.

The protein belongs to the cytochrome c oxidase subunit 2 family.

The protein resides in the cell membrane. It catalyses the reaction 2 a quinol + O2 = 2 a quinone + 2 H2O. In terms of biological role, the terminal oxidase is the component of the respiratory chain that catalyzes the reduction of oxygen to water. Subunits 1-3 form the functional core of the enzyme complex. Subunit 2 transfers the electrons from caldariella quinol to the bimetallic center of the catalytic subunit 1 that is formed by heme A3 and Cu(B). The protein is Quinol oxidase subunit 2 (soxA) of Sulfolobus acidocaldarius (strain ATCC 33909 / DSM 639 / JCM 8929 / NBRC 15157 / NCIMB 11770).